We begin with the raw amino-acid sequence, 295 residues long: Protease HtpX (295 aa).

2 helical membrane-spanning segments follow: residues 4-24 (ILLF…TLSL) and 41-61 (SSLL…SLFI). His147 lines the Zn(2+) pocket. Glu148 is an active-site residue. His151 is a binding site for Zn(2+). Transmembrane regions (helical) follow at residues 158–178 (VTLA…ARII) and 199–219 (VATI…VMWF). Zn(2+) is bound at residue Glu224.

This sequence belongs to the peptidase M48B family. Requires Zn(2+) as cofactor.

Its subcellular location is the cell inner membrane. This chain is Protease HtpX, found in Pseudomonas putida (strain W619).